The primary structure comprises 312 residues: Ribonuclease Z (312 aa).

Zn(2+)-binding residues include histidine 62, histidine 64, aspartate 66, histidine 67, histidine 139, aspartate 210, and histidine 268. The Proton acceptor role is filled by aspartate 66.

Belongs to the RNase Z family. As to quaternary structure, homodimer. Zn(2+) serves as cofactor.

It carries out the reaction Endonucleolytic cleavage of RNA, removing extra 3' nucleotides from tRNA precursor, generating 3' termini of tRNAs. A 3'-hydroxy group is left at the tRNA terminus and a 5'-phosphoryl group is left at the trailer molecule.. Zinc phosphodiesterase, which displays some tRNA 3'-processing endonuclease activity. Probably involved in tRNA maturation, by removing a 3'-trailer from precursor tRNA. In Crocosphaera subtropica (strain ATCC 51142 / BH68) (Cyanothece sp. (strain ATCC 51142)), this protein is Ribonuclease Z.